Here is a 128-residue protein sequence, read N- to C-terminus: uncharacterized protein (128 aa).

Residues Met-1 to Pro-126 enclose the VOC domain.

This is an uncharacterized protein from Bacillus subtilis (strain 168).